We begin with the raw amino-acid sequence, 302 residues long: B3 domain-containing protein At3g17010 (302 aa).

The TF-B3 1 DNA-binding region spans 21–116 (FFKIFQRADL…VFHVNIYEQN (96 aa)). The segment at 123-192 (PRKFQTMGPS…KVKKKSKSKS (70 aa)) is disordered. Residues 135 to 174 (IKKEEGENSLIDVKKEEESDESPGRAEFLVRKKKTEDSKS) show a composition bias toward basic and acidic residues. A compositionally biased stretch (basic residues) spans 175–192 (SKKKMTRNKVKKKSKSKS). The segment at residues 199–292 (VPEFKITIRK…EFVLLTSKKN (94 aa)) is a DNA-binding region (TF-B3 2).

It is found in the nucleus. The sequence is that of B3 domain-containing protein At3g17010 from Arabidopsis thaliana (Mouse-ear cress).